The following is a 360-amino-acid chain: Spermidine/putrescine-binding periplasmic protein 1 (360 aa).

The signal sequence occupies residues 1–16 (MKKFAGLITASFVAAT).

It belongs to the bacterial solute-binding protein PotD/PotF family.

The protein resides in the periplasm. In terms of biological role, required for the activity of the bacterial periplasmic transport system of putrescine and spermidine. Polyamine binding protein. In Haemophilus influenzae (strain ATCC 51907 / DSM 11121 / KW20 / Rd), this protein is Spermidine/putrescine-binding periplasmic protein 1 (potD-B).